We begin with the raw amino-acid sequence, 167 residues long: MQVEVGQIVNTHGIKGEVKVKSNSDFTDTRFQPGEVLTVNHQNHEEQLTVLSYRVHKGFHMLKFEGINNINDVEQYKGDYLYQERDHEDIELAENEYYYSDIIGSTVFDNDNQPIGRVINIFETGANDVWVVKGEKEYLIPYIADVVKEIDIENKTIRITPMEGLLD.

One can recognise a PRC barrel domain in the interval 94–165 (ENEYYYSDII…TIRITPMEGL (72 aa)).

The protein belongs to the RimM family. In terms of assembly, binds ribosomal protein uS19.

The protein localises to the cytoplasm. Its function is as follows. An accessory protein needed during the final step in the assembly of 30S ribosomal subunit, possibly for assembly of the head region. Essential for efficient processing of 16S rRNA. May be needed both before and after RbfA during the maturation of 16S rRNA. It has affinity for free ribosomal 30S subunits but not for 70S ribosomes. In Staphylococcus haemolyticus (strain JCSC1435), this protein is Ribosome maturation factor RimM.